Reading from the N-terminus, the 543-residue chain is uncharacterized protein (543 aa).

In terms of domain architecture, TRAM spans 1–59 (MLKKNDIVEVEIVDLTHEGAGVAKVDGLVFFVENALPSEKILMRVLKVNKKIGFGKVEK). S-adenosyl-L-methionine-binding residues include Gln-283, Tyr-312, Glu-333, and Asp-381. The active-site Nucleophile is Cys-408.

Belongs to the class I-like SAM-binding methyltransferase superfamily. RNA M5U methyltransferase family.

This is an uncharacterized protein from Streptococcus pneumoniae (strain ATCC BAA-255 / R6).